Reading from the N-terminus, the 50-residue chain is Thymosin beta-4 (50 aa).

Residues 1-50 (MLLPATMSDKPDMAEIEKFDKSKLKKTETQEKNPLPSKETIEQEKQAGES) are disordered. Ser-8 carries the post-translational modification Phosphoserine. Residues 9-31 (DKPDMAEIEKFDKSKLKKTETQE) are compositionally biased toward basic and acidic residues. Lys-10 bears the N6-acetyllysine mark. Lys-18 is subject to N6-acetyllysine; alternate. Residue Lys-18 forms a Glycyl lysine isopeptide (Lys-Gly) (interchain with G-Cter in SUMO2); alternate linkage. At Thr-29 the chain carries Phosphothreonine. Residue Lys-32 is modified to N6-acetyllysine. At Ser-37 the chain carries Phosphoserine. Lys-38 carries the N6-acetyllysine modification. The span at 39-50 (ETIEQEKQAGES) shows a compositional bias: basic and acidic residues. Thr-40 is modified (phosphothreonine). N6-acetyllysine is present on Lys-45.

Belongs to the thymosin beta family. In terms of assembly, identified in a complex composed of ACTA1, COBL, GSN AND TMSB4X. Interacts with SERPINB1. AcSDKP is inactivated by ACE, which removes the dipeptide Lys-Pro from its C-terminus. Originally found in thymus but it is widely distributed in many tissues.

It is found in the cytoplasm. The protein localises to the cytoskeleton. Its function is as follows. Plays an important role in the organization of the cytoskeleton. Binds to and sequesters actin monomers (G actin) and therefore inhibits actin polymerization. In terms of biological role, potent inhibitor of bone marrow derived stem cell differentiation. Acts by inhibits the entry of hematopoietic pluripotent stem cells into the S-phase. The polypeptide is Thymosin beta-4 (Tmsb4x) (Mus musculus (Mouse)).